The chain runs to 571 residues: Pectinesterase/pectinesterase inhibitor (571 aa).

A pectinesterase inhibitor region spans residues 27 to 178 (NSHQKAVESL…KILSSNAIDI (152 aa)). Residues 233–254 (AQAGRPGAPADEGIGEGGGGGG) are disordered. Positions 259 to 558 (THVVAKDGSG…TVANWLTPAN (300 aa)) are pectinesterase. 2 residues coordinate substrate: threonine 336 and glutamine 366. Aspartate 389 (proton donor; for pectinesterase activity) is an active-site residue. Aspartate 410 (nucleophile; for pectinesterase activity) is an active-site residue. Residues arginine 479 and tryptophan 481 each coordinate substrate.

In the N-terminal section; belongs to the PMEI family. The protein in the C-terminal section; belongs to the pectinesterase family.

It localises to the secreted. The protein resides in the cell wall. It carries out the reaction [(1-&gt;4)-alpha-D-galacturonosyl methyl ester](n) + n H2O = [(1-&gt;4)-alpha-D-galacturonosyl](n) + n methanol + n H(+). Its pathway is glycan metabolism; pectin degradation; 2-dehydro-3-deoxy-D-gluconate from pectin: step 1/5. Its function is as follows. Acts in the modification of cell walls via demethylesterification of cell wall pectin. The protein is Pectinesterase/pectinesterase inhibitor of Brassica campestris (Field mustard).